The following is a 177-amino-acid chain: MSELTTVARPYARAAFEFAVDSNKIEAWSEMLFFTAEVVNNPTMVKILTSDKTAQELAELFLNVCEDQLDENGQNFIKIMAENGRLRFLPRVAQLFAALEDEHKKQVDVNVVSAYGLSKKQLDELSKSLEKRLARKVNLHCSIDKTLIAGMVVTVGDLVIDSSAKGQLGRLSNTLQS.

Belongs to the ATPase delta chain family. In terms of assembly, F-type ATPases have 2 components, F(1) - the catalytic core - and F(0) - the membrane proton channel. F(1) has five subunits: alpha(3), beta(3), gamma(1), delta(1), epsilon(1). F(0) has three main subunits: a(1), b(2) and c(10-14). The alpha and beta chains form an alternating ring which encloses part of the gamma chain. F(1) is attached to F(0) by a central stalk formed by the gamma and epsilon chains, while a peripheral stalk is formed by the delta and b chains.

It is found in the cell inner membrane. Functionally, f(1)F(0) ATP synthase produces ATP from ADP in the presence of a proton or sodium gradient. F-type ATPases consist of two structural domains, F(1) containing the extramembraneous catalytic core and F(0) containing the membrane proton channel, linked together by a central stalk and a peripheral stalk. During catalysis, ATP synthesis in the catalytic domain of F(1) is coupled via a rotary mechanism of the central stalk subunits to proton translocation. This protein is part of the stalk that links CF(0) to CF(1). It either transmits conformational changes from CF(0) to CF(1) or is implicated in proton conduction. The chain is ATP synthase subunit delta from Psychromonas ingrahamii (strain DSM 17664 / CCUG 51855 / 37).